The sequence spans 202 residues: MSDKAAAPRKQGRNNGAVVMMCLSFVFGMGAMSYAAVPLYRIFCQVTGYNGTTQRVEQMSSVVLDRKMRVTFDANVAPGLQWNFKPVEREVNPKIGETIQVNFVAENKSNETQRGQAVFNVTPGEAGAYFNKVQCFCFTETDLKPGEKLEMPVVFYIDPEIVKAVESKDIHTVTLSYTFYPKEGPKPVASNEGGTVKIEKKL.

Topologically, residues 1–14 are cytoplasmic; that stretch reads MSDKAAAPRKQGRN. A helical; Signal-anchor for type II membrane protein transmembrane segment spans residues 15 to 37; it reads NGAVVMMCLSFVFGMGAMSYAAV. Topologically, residues 38–202 are periplasmic; that stretch reads PLYRIFCQVT…GGTVKIEKKL (165 aa).

The protein belongs to the COX11/CtaG family.

Its subcellular location is the cell inner membrane. Its function is as follows. Exerts its effect at some terminal stage of cytochrome c oxidase synthesis, probably by being involved in the insertion of the copper B into subunit I. This is Cytochrome c oxidase assembly protein CtaG from Rhizobium etli (strain ATCC 51251 / DSM 11541 / JCM 21823 / NBRC 15573 / CFN 42).